The following is a 205-amino-acid chain: SREBP regulating gene protein (205 aa).

At 1–16 (MALYVSMVWRKILRKR) the chain is on the cytoplasmic side. A helical transmembrane segment spans residues 17 to 35 (WVLGVVFGLSLIYFLTSTF). The Lumenal portion of the chain corresponds to 36–205 (KQEERTVRDR…GESPPELLPI (170 aa)). An N-linked (GlcNAc...) asparagine glycan is attached at asparagine 67.

The protein belongs to the SPRING family.

Its subcellular location is the golgi apparatus membrane. Positively regulates hepatic SREBP signaling pathway by modulating the proper localization of SCAP (SREBP cleavage-activating protein) to the endoplasmic reticulum, thereby controlling the level of functional SCAP. The protein is SREBP regulating gene protein of Xenopus laevis (African clawed frog).